Reading from the N-terminus, the 351-residue chain is Soluble interferon alpha/beta receptor OPG204 (351 aa).

A signal peptide spans 1-19 (MTMKMMVHIYFVSLLLLLF). Ig-like C2-type domains follow at residues 65 to 147 (LGEP…RSHI) and 155 to 237 (PKTY…IVVS). 2 disulfide bridges follow: C73-C129 and C172-C221. Residues N117, N182, N261, N269, and N321 are each glycosylated (N-linked (GlcNAc...) asparagine; by host). Residues 246–345 (PSQDHRFKLI…HNYYFEKTLT (100 aa)) enclose the Ig-like V-type domain. A disulfide bridge links C272 with C333.

The protein belongs to the interleukin-1 receptor family. In terms of assembly, interacts with host IFNA1.

The protein localises to the secreted. Its function is as follows. Counteracts the antiviral effects of host IFN-alpha/beta and key IFN-inducible proteins involved in viral RNA degradation suxh as host OAS1. Acts as a soluble IFN-alpha receptor and thus inhibits the interaction between host IFN-alpha and its receptor. This Vaccinia virus (strain Western Reserve) (VACV) protein is Soluble interferon alpha/beta receptor OPG204 (OPG204).